The chain runs to 397 residues: Probable peptidoglycan glycosyltransferase FtsW (397 aa).

Over 1-26 (MSPRNSALERFRQHQKIPEKRWQRLA) the chain is Cytoplasmic. A helical transmembrane segment spans residues 27–47 (FPDVGLLLCWLALIVIGMVMV). Over 48-69 (TSSSLSEAHVERLSTHHFAIRQ) the chain is Periplasmic. A helical transmembrane segment spans residues 70–90 (GIFYVGSSIFAYIAFMLGTNF). Over 91-96 (YREKAK) the chain is Cytoplasmic. The helical transmembrane segment at 97–117 (FILGLAFLGLLLVYAPGIGVV) threads the bilayer. The Periplasmic portion of the chain corresponds to 118–126 (VNGSRRWLN). Residues 127–147 (LGVINLQVGEFAKLAVFIFTA) traverse the membrane as a helical segment. The Cytoplasmic portion of the chain corresponds to 148–159 (AYLQHHTQRLDH). Residues 160–180 (SWQPIIGLLAVTACFALMFYL) traverse the membrane as a helical segment. At 181–185 (QPDFG) the chain is on the periplasmic side. Residues 186–206 (TMVVIVATVLGMLFLSGVSIW) traverse the membrane as a helical segment. Arg-207 is a topological domain (cytoplasmic). Residues 208-228 (LLLLGVLIAPAMVWVLISESY) form a helical membrane-spanning segment. Residues 229 to 294 (RLRRLTTFIN…IFSIIAEETG (66 aa)) are Periplasmic-facing. Residues 295 to 315 (LVGALIVMAILMILVWRAFAI) traverse the membrane as a helical segment. Over 316–328 (GYLADRMRKRFSS) the chain is Cytoplasmic. The chain crosses the membrane as a helical span at residues 329-349 (LLAYGIGLWLGLQSLINIGVT). Residues 350-359 (TGALPTKGLT) lie on the Periplasmic side of the membrane. The chain crosses the membrane as a helical span at residues 360-380 (LPLISYGGSSILMTSIALAIL). Residues 381–397 (ARIDAESRFIARLEGKI) lie on the Cytoplasmic side of the membrane.

It belongs to the SEDS family. FtsW subfamily.

It localises to the cell inner membrane. It catalyses the reaction [GlcNAc-(1-&gt;4)-Mur2Ac(oyl-L-Ala-gamma-D-Glu-L-Lys-D-Ala-D-Ala)](n)-di-trans,octa-cis-undecaprenyl diphosphate + beta-D-GlcNAc-(1-&gt;4)-Mur2Ac(oyl-L-Ala-gamma-D-Glu-L-Lys-D-Ala-D-Ala)-di-trans,octa-cis-undecaprenyl diphosphate = [GlcNAc-(1-&gt;4)-Mur2Ac(oyl-L-Ala-gamma-D-Glu-L-Lys-D-Ala-D-Ala)](n+1)-di-trans,octa-cis-undecaprenyl diphosphate + di-trans,octa-cis-undecaprenyl diphosphate + H(+). Its pathway is cell wall biogenesis; peptidoglycan biosynthesis. Its function is as follows. Peptidoglycan polymerase that is essential for cell division. This is Probable peptidoglycan glycosyltransferase FtsW from Dichelobacter nodosus (strain VCS1703A).